The primary structure comprises 299 residues: 4-diphosphocytidyl-2-C-methyl-D-erythritol kinase (299 aa).

The active site involves Lys16. 97–107 (PVASGIGGGSA) contacts ATP. Asp140 is a catalytic residue.

Belongs to the GHMP kinase family. IspE subfamily.

It carries out the reaction 4-CDP-2-C-methyl-D-erythritol + ATP = 4-CDP-2-C-methyl-D-erythritol 2-phosphate + ADP + H(+). It participates in isoprenoid biosynthesis; isopentenyl diphosphate biosynthesis via DXP pathway; isopentenyl diphosphate from 1-deoxy-D-xylulose 5-phosphate: step 3/6. Its function is as follows. Catalyzes the phosphorylation of the position 2 hydroxy group of 4-diphosphocytidyl-2C-methyl-D-erythritol. In Roseobacter denitrificans (strain ATCC 33942 / OCh 114) (Erythrobacter sp. (strain OCh 114)), this protein is 4-diphosphocytidyl-2-C-methyl-D-erythritol kinase.